The chain runs to 700 residues: Elongation factor G (700 aa).

In terms of domain architecture, tr-type G spans 8–290 (ERYRNIGISA…AVIDYLPSPV (283 aa)). Residues 17–24 (AHIDAGKT), 88–92 (DTPGH), and 142–145 (NKMD) contribute to the GTP site.

Belongs to the TRAFAC class translation factor GTPase superfamily. Classic translation factor GTPase family. EF-G/EF-2 subfamily.

It localises to the cytoplasm. In terms of biological role, catalyzes the GTP-dependent ribosomal translocation step during translation elongation. During this step, the ribosome changes from the pre-translocational (PRE) to the post-translocational (POST) state as the newly formed A-site-bound peptidyl-tRNA and P-site-bound deacylated tRNA move to the P and E sites, respectively. Catalyzes the coordinated movement of the two tRNA molecules, the mRNA and conformational changes in the ribosome. The polypeptide is Elongation factor G (Leptothrix cholodnii (strain ATCC 51168 / LMG 8142 / SP-6) (Leptothrix discophora (strain SP-6))).